Here is a 305-residue protein sequence, read N- to C-terminus: MKEALHLKIPASTANLGVGFDSIGMALNKFLYLDVTVNDEDQWSFNHIGPNVDELPNDESHYIYQIAQKVAETYEVELPNLNVEMRSEIPLARGLGSSASALVGALYIANYFGDIELSKYELLQLATDFEGHPDNVAPTIYGGLVLGYYNGDTKVTDVSYIDTPKVDIIITIPSYKLKTIDARNALPDTFSHEKAVQNSAISNTMISALIQHNYELAGKMMEQDGFHEPYRQHLIPEFQTIKGIAKQHLAYATVISGAGPTVLTLIAPERSGELVRALKREFKDCRSELVTINETGVTTKVLYQR.

An ATP-binding site is contributed by 90–100; the sequence is PLARGLGSSAS.

This sequence belongs to the GHMP kinase family. Homoserine kinase subfamily.

Its subcellular location is the cytoplasm. It catalyses the reaction L-homoserine + ATP = O-phospho-L-homoserine + ADP + H(+). It functions in the pathway amino-acid biosynthesis; L-threonine biosynthesis; L-threonine from L-aspartate: step 4/5. Catalyzes the ATP-dependent phosphorylation of L-homoserine to L-homoserine phosphate. The polypeptide is Homoserine kinase (Staphylococcus saprophyticus subsp. saprophyticus (strain ATCC 15305 / DSM 20229 / NCIMB 8711 / NCTC 7292 / S-41)).